A 111-amino-acid chain; its full sequence is Cell cycle protein GpsB (111 aa).

A coiled-coil region spans residues 32-63; sequence LDDIMKDYDAYEAIIKELKGEIARLKAQAANS. A disordered region spans residues 59-80; it reads QAANSPKTTLPTEESNDVLRTE. The span at 60–71 shows a compositional bias: polar residues; sequence AANSPKTTLPTE.

The protein belongs to the GpsB family. Forms polymers through the coiled coil domains. Interacts with PBP1, MreC and EzrA.

The protein resides in the cytoplasm. Divisome component that associates with the complex late in its assembly, after the Z-ring is formed, and is dependent on DivIC and PBP2B for its recruitment to the divisome. Together with EzrA, is a key component of the system that regulates PBP1 localization during cell cycle progression. Its main role could be the removal of PBP1 from the cell pole after pole maturation is completed. Also contributes to the recruitment of PBP1 to the division complex. Not essential for septum formation. The sequence is that of Cell cycle protein GpsB from Streptococcus suis (strain 98HAH33).